A 697-amino-acid chain; its full sequence is Elongation factor G (697 aa).

The region spanning 8–282 (EDYRNIGIMA…AVVDYLPSPL (275 aa)) is the tr-type G domain. GTP is bound by residues 17–24 (AHIDAGKT), 81–85 (DTPGH), and 135–138 (NKMD).

This sequence belongs to the TRAFAC class translation factor GTPase superfamily. Classic translation factor GTPase family. EF-G/EF-2 subfamily.

The protein resides in the cytoplasm. Catalyzes the GTP-dependent ribosomal translocation step during translation elongation. During this step, the ribosome changes from the pre-translocational (PRE) to the post-translocational (POST) state as the newly formed A-site-bound peptidyl-tRNA and P-site-bound deacylated tRNA move to the P and E sites, respectively. Catalyzes the coordinated movement of the two tRNA molecules, the mRNA and conformational changes in the ribosome. The protein is Elongation factor G of Mycoplasmopsis agalactiae (strain NCTC 10123 / CIP 59.7 / PG2) (Mycoplasma agalactiae).